Here is a 491-residue protein sequence, read N- to C-terminus: Aspartyl/glutamyl-tRNA(Asn/Gln) amidotransferase subunit B (491 aa).

It belongs to the GatB/GatE family. GatB subfamily. As to quaternary structure, heterotrimer of A, B and C subunits.

It carries out the reaction L-glutamyl-tRNA(Gln) + L-glutamine + ATP + H2O = L-glutaminyl-tRNA(Gln) + L-glutamate + ADP + phosphate + H(+). The enzyme catalyses L-aspartyl-tRNA(Asn) + L-glutamine + ATP + H2O = L-asparaginyl-tRNA(Asn) + L-glutamate + ADP + phosphate + 2 H(+). Allows the formation of correctly charged Asn-tRNA(Asn) or Gln-tRNA(Gln) through the transamidation of misacylated Asp-tRNA(Asn) or Glu-tRNA(Gln) in organisms which lack either or both of asparaginyl-tRNA or glutaminyl-tRNA synthetases. The reaction takes place in the presence of glutamine and ATP through an activated phospho-Asp-tRNA(Asn) or phospho-Glu-tRNA(Gln). The protein is Aspartyl/glutamyl-tRNA(Asn/Gln) amidotransferase subunit B of Nostoc sp. (strain PCC 7120 / SAG 25.82 / UTEX 2576).